We begin with the raw amino-acid sequence, 275 residues long: Structure-specific endonuclease subunit SLX1 (275 aa).

In terms of domain architecture, GIY-YIG spans 12 to 95 (RFFGVYLLYC…QHPHASRRLA (84 aa)). Pro residues predominate over residues 148 to 161 (HVPLAFGPPPPQAP). Positions 148-179 (HVPLAFGPPPPQAPAPRRRAGPFDDAEPEPDQ) are disordered. Residues 186 to 238 (CSLCAQTIQDEEGPLCCPHPGCLLRAHVICLAEEFLQEEPGQLLPLEGQCPCC) form an SLX1-type zinc finger.

The protein belongs to the SLX1 family. Forms a heterodimer with SLX4. A divalent metal cation serves as cofactor.

It localises to the nucleus. Its function is as follows. Catalytic subunit of the SLX1-SLX4 structure-specific endonuclease that resolves DNA secondary structures generated during DNA repair and recombination. Has endonuclease activity towards branched DNA substrates, introducing single-strand cuts in duplex DNA close to junctions with ss-DNA. Has a preference for 5'-flap structures, and promotes symmetrical cleavage of static and migrating Holliday junctions (HJs). Resolves HJs by generating two pairs of ligatable, nicked duplex products. The polypeptide is Structure-specific endonuclease subunit SLX1 (Homo sapiens (Human)).